A 358-amino-acid polypeptide reads, in one-letter code: Histamine H2 receptor (358 aa).

Over 1–22 (MEPNGTVHSCCLDSMALKVTIS) the chain is Extracellular. The N-linked (GlcNAc...) asparagine glycan is linked to Asn4. The helical transmembrane segment at 23 to 44 (VVLTTLILITIAGNVVVCLAVS) threads the bilayer. Residues 45-57 (LNRRLRSLTNCFI) are Cytoplasmic-facing. The helical transmembrane segment at 58–81 (VSLAATDLLLGLLVLPFSAIYQLS) threads the bilayer. Residues 82-92 (FTWSFGHVFCN) are Extracellular-facing. Cys91 and Cys173 form a disulfide bridge. Residues 93 to 114 (IYTSLDVMLCTASILNLFMISL) form a helical membrane-spanning segment. Residues 115–134 (DRYCAVTDPLRYPVLVTPVR) lie on the Cytoplasmic side of the membrane. A helical transmembrane segment spans residues 135–159 (VAISLVFIWVISITLSFLSIHLGWN). The Extracellular segment spans residues 160–179 (SRNGTRGGNDTFKCKVQVNE). Residues 180–203 (VYGLVDGLVTFYLPLLIMCVTYYR) traverse the membrane as a helical segment. Topologically, residues 204-233 (IFKIAREQAKRINHISSWKAATIREHKATV) are cytoplasmic. A helical membrane pass occupies residues 234–257 (TLAAVMGAFIICWFPYFTAFVYRG). At 258–266 (LRGDDAINE) the chain is on the extracellular side. Residues 267–288 (AVEGIVLWLGYANSALNPILYA) traverse the membrane as a helical segment. The Cytoplasmic portion of the chain corresponds to 289–358 (ALNRDFRTAY…LTHPQGNPIR (70 aa)). The S-palmitoyl cysteine moiety is linked to residue Cys304.

This sequence belongs to the G-protein coupled receptor 1 family.

The protein resides in the cell membrane. Functionally, the H2 subclass of histamine receptors mediates gastric acid secretion. The activity of this receptor is mediated by G proteins which activate adenylyl cyclase. In Rattus norvegicus (Rat), this protein is Histamine H2 receptor (Hrh2).